A 447-amino-acid polypeptide reads, in one-letter code: Naphthalene 1,2-dioxygenase system, large oxygenase component (447 aa).

The 99-residue stretch at 37 to 135 (WLFLTHDSLI…IKKKCLGLKE (99 aa)) folds into the Rieske domain. The [2Fe-2S] cluster site is built by cysteine 79, histidine 81, cysteine 99, and histidine 102. Residues histidine 206, histidine 211, and aspartate 360 each coordinate Fe cation.

It belongs to the bacterial ring-hydroxylating dioxygenase alpha subunit family. As to quaternary structure, the naphthalene dioxygenase (NDO) multicomponent enzyme system is composed of an electron transfer component and a dioxygenase component (iron sulfur protein (ISP)). The electron transfer component is composed of a ferredoxin reductase (NagAa) and a ferredoxin (NagAb), and the dioxygenase component is formed by a large alpha subunit (NagAc) and a small beta subunit (NagAd). The cofactor is [2Fe-2S] cluster. It depends on Fe(2+) as a cofactor.

It catalyses the reaction naphthalene + NADH + O2 + H(+) = (1R,2S)-1,2-dihydronaphthalene-1,2-diol + NAD(+). It functions in the pathway aromatic compound metabolism; naphthalene degradation. In terms of biological role, component of the naphthalene dioxygenase (NDO) multicomponent enzyme system which catalyzes the incorporation of both atoms of molecular oxygen into naphthalene to form cis-(1R,2S)-dihydroxy-1,2-dihydronaphthalene. The alpha subunit has a catalytic role in the holoenzyme. Also able to use styrene as substrate. This is Naphthalene 1,2-dioxygenase system, large oxygenase component from Ralstonia sp.